Reading from the N-terminus, the 380-residue chain is 4-hydroxy-3-methylbut-2-en-1-yl diphosphate synthase (flavodoxin) (380 aa).

4 residues coordinate [4Fe-4S] cluster: cysteine 279, cysteine 282, cysteine 314, and glutamate 321.

Belongs to the IspG family. [4Fe-4S] cluster is required as a cofactor.

The catalysed reaction is (2E)-4-hydroxy-3-methylbut-2-enyl diphosphate + oxidized [flavodoxin] + H2O + 2 H(+) = 2-C-methyl-D-erythritol 2,4-cyclic diphosphate + reduced [flavodoxin]. It participates in isoprenoid biosynthesis; isopentenyl diphosphate biosynthesis via DXP pathway; isopentenyl diphosphate from 1-deoxy-D-xylulose 5-phosphate: step 5/6. In terms of biological role, converts 2C-methyl-D-erythritol 2,4-cyclodiphosphate (ME-2,4cPP) into 1-hydroxy-2-methyl-2-(E)-butenyl 4-diphosphate. The chain is 4-hydroxy-3-methylbut-2-en-1-yl diphosphate synthase (flavodoxin) from Tropheryma whipplei (strain TW08/27) (Whipple's bacillus).